The chain runs to 152 residues: D-aminoacyl-tRNA deacylase (152 aa).

Positions 142–143 match the Gly-cisPro motif, important for rejection of L-amino acids motif; it reads GP.

It belongs to the DTD family. In terms of assembly, homodimer.

It localises to the cytoplasm. It carries out the reaction glycyl-tRNA(Ala) + H2O = tRNA(Ala) + glycine + H(+). The catalysed reaction is a D-aminoacyl-tRNA + H2O = a tRNA + a D-alpha-amino acid + H(+). Its function is as follows. An aminoacyl-tRNA editing enzyme that deacylates mischarged D-aminoacyl-tRNAs. Also deacylates mischarged glycyl-tRNA(Ala), protecting cells against glycine mischarging by AlaRS. Acts via tRNA-based rather than protein-based catalysis; rejects L-amino acids rather than detecting D-amino acids in the active site. By recycling D-aminoacyl-tRNA to D-amino acids and free tRNA molecules, this enzyme counteracts the toxicity associated with the formation of D-aminoacyl-tRNA entities in vivo and helps enforce protein L-homochirality. This chain is D-aminoacyl-tRNA deacylase, found in Paraburkholderia phytofirmans (strain DSM 17436 / LMG 22146 / PsJN) (Burkholderia phytofirmans).